A 242-amino-acid chain; its full sequence is Uridylate kinase (242 aa).

ATP is bound at residue 12 to 15 (KLSG). An involved in allosteric activation by GTP region spans residues 20–25 (GDEGFG). Residue Gly54 participates in UMP binding. Positions 55 and 59 each coordinate ATP. UMP-binding positions include Asp74 and 135 to 142 (TGSPFFTT). ATP is bound by residues Thr162, Tyr168, and Asp171.

It belongs to the UMP kinase family. Homohexamer.

It localises to the cytoplasm. It catalyses the reaction UMP + ATP = UDP + ADP. The protein operates within pyrimidine metabolism; CTP biosynthesis via de novo pathway; UDP from UMP (UMPK route): step 1/1. With respect to regulation, allosterically activated by GTP. Inhibited by UTP. Its function is as follows. Catalyzes the reversible phosphorylation of UMP to UDP. The sequence is that of Uridylate kinase from Pasteurella multocida (strain Pm70).